A 211-amino-acid chain; its full sequence is Scoloptoxin SSD43 (211 aa).

A signal peptide spans 1–20; that stretch reads MNFVIYGVIVVLTSQLYVDG.

Contains 3 disulfide bonds. As to expression, expressed by the venom gland.

The protein resides in the secreted. Shows trypsin inhibiting activity. The protein is highly thermally stable, since its incubation in boiling water during 10 minutes does not reduce its activity. The polypeptide is Scoloptoxin SSD43 (Scolopendra dehaani (Thai centipede)).